Here is a 662-residue protein sequence, read N- to C-terminus: MLNPGALGVNLVVEELETETKFLIKQVECIDEHHANKALEELMPLLKLQHPNLSLYHEMFIMWNNEISSLFLCLVMDYYSQGTFQNIMENKRKLKAVVDTEWMHTMLSQVLDAIEYLHKLNIVHRNLKPSNIVLVNSGYCKLQDMSSQALMTHEAKWNVRAEEDPCQKSWMAPEALKFSFSTKSDIWSLGCIILDMATCSFLNDTEAMQLRKAIRHHPGSLKPILKTMEEKQIPGTDVYYLLLPFMLHINPSDRLAIKDVMQVTFMSNSFKSSSVALNMQRQKVPIFITDVLLEGNMANILDVMQNFSSRPEVQLRAINKLLTMPEDQLGLPWPTELLEEVISIIKQHGRILDILLSTCSLLLRVLGQALAKDPEAEIPRSSLIISFLMDTLRSHPNSERLVNVVYNVLAIISSQGQISEELEEEGLFQLAQENLEHFQEDRDICLSILSLLWSLLVDVVTVDKEPLEQLSGMVTWVLATHPEDVEIAEAGCAVLWLLSLLGCIKESQFEQVVVLLLRSIQLCPGRVLLVNNAFRGLASLAKVSELVAFRIVVLEEGSSGLHLIQDIYKLYKDDPEVVENLCMLLAHLTSYKEILPEMESGGIKDLVQVIRGRFTSSLELISYADEILQVLEANAQPGLQEDQLEPPAGQEAPLQGEPLFRP.

In terms of domain architecture, Protein kinase spans 1 to 202; it reads MLNPGALGVN…ILDMATCSFL (202 aa). Residues 2–10 and Lys-25 contribute to the ATP site; that span reads LNPGALGVN. Residues 639–662 are disordered; the sequence is LQEDQLEPPAGQEAPLQGEPLFRP.

The protein belongs to the protein kinase superfamily. Ser/Thr protein kinase family. STKL subfamily.

This Mus musculus (Mouse) protein is Serine/threonine kinase-like domain-containing protein STKLD1 (Stkld1).